The chain runs to 512 residues: Citrate synthase (512 aa).

Catalysis depends on residues histidine 288, histidine 327, and aspartate 383. Residues 483–512 (AIPKTATGSKSQLSASIEQSFGEKISPQSH) are disordered. Residues 488–501 (ATGSKSQLSASIEQ) show a composition bias toward polar residues.

This sequence belongs to the citrate synthase family.

The protein resides in the cytoplasm. It carries out the reaction oxaloacetate + acetyl-CoA + H2O = citrate + CoA + H(+). Its pathway is carbohydrate metabolism; tricarboxylic acid cycle; isocitrate from oxaloacetate: step 1/2. The chain is Citrate synthase (gltA) from Dictyostelium discoideum (Social amoeba).